The sequence spans 425 residues: MKQTDDKDSLLNRLLLSLGILLFIRMGTFLPVPGIDHGHLEFYIERHFRLRTLVSTFAGDNTVVVGLFTLNIFPYINASIIMQLLVSLLPGLSKLQKEGGAEARRSINSLTRLLTLGWSLIQSTSVAFYLKRALFEWNLVLAFEIVIWLTTGAMIVLWLSEIITEYGLGNGPSLLIYTNIVSSLPGFVKQVITESSGKVPIGSWLLSGFVLFVALYGIVLLQEGMRKVYLISSKQLNQTSLPFSGSSNLESGYYIPLRFNQAGVMPIILTTAVLVIPTFIYNLGLLRILTPLITLPVFVKSYKIIYWVSYFVLILLFSLFYSTIVVNPKDLSDELQKMAVSIPGIRPGVETTFYLKQVMKRVTLLGAIMLALLATLPNIIQAILSLSGFTNLGTTSLLILVGVILDLTREMRSIILSNIYYDMFD.

10 helical membrane passes run 15–35, 62–82, 113–131, 139–159, 168–188, 201–221, 266–286, 304–324, 364–384, and 385–405; these read LLSL…VPGI, TVVV…SIIM, LLTL…FYLK, LVLA…VLWL, LGNG…PGFV, IGSW…IVLL, PIIL…LGLL, IIYW…YSTI, LLGA…QAIL, and SLSG…GVIL.

It belongs to the SecY/SEC61-alpha family. In terms of assembly, component of the plastid Sec protein translocase complex, which is composed of at least SecY, SecE and SecG.

The protein resides in the plastid. The protein localises to the chloroplast thylakoid membrane. Functionally, the central subunit of the protein translocation channel SecYE. Consists of two halves formed by TMs 1-5 and 6-10. These two domains form a lateral gate at the front which open onto the bilayer between TMs 2 and 7, and are clamped together by SecE at the back. The channel is closed by both a pore ring composed of hydrophobic SecY resides and a short helix (helix 2A) on the extracellular side of the membrane which forms a plug. This is Protein translocase subunit SecY from Trieres chinensis (Marine centric diatom).